A 152-amino-acid polypeptide reads, in one-letter code: Xanthine-guanine phosphoribosyltransferase (152 aa).

Residues 37-38 (RG), R69, and 88-96 (DDLVDTGGT) contribute to the 5-phospho-alpha-D-ribose 1-diphosphate site. Position 69 (R69) interacts with GMP. A Mg(2+)-binding site is contributed by D89. Guanine is bound by residues D92 and I135. 2 residues coordinate xanthine: D92 and I135. Residues 92-96 (DTGGT) and 134-135 (WI) contribute to the GMP site.

The protein belongs to the purine/pyrimidine phosphoribosyltransferase family. XGPT subfamily. Homotetramer. Mg(2+) serves as cofactor.

It is found in the cell inner membrane. It carries out the reaction GMP + diphosphate = guanine + 5-phospho-alpha-D-ribose 1-diphosphate. The enzyme catalyses XMP + diphosphate = xanthine + 5-phospho-alpha-D-ribose 1-diphosphate. The catalysed reaction is IMP + diphosphate = hypoxanthine + 5-phospho-alpha-D-ribose 1-diphosphate. The protein operates within purine metabolism; GMP biosynthesis via salvage pathway; GMP from guanine: step 1/1. It participates in purine metabolism; XMP biosynthesis via salvage pathway; XMP from xanthine: step 1/1. Purine salvage pathway enzyme that catalyzes the transfer of the ribosyl-5-phosphate group from 5-phospho-alpha-D-ribose 1-diphosphate (PRPP) to the N9 position of the 6-oxopurines guanine and xanthine to form the corresponding ribonucleotides GMP (guanosine 5'-monophosphate) and XMP (xanthosine 5'-monophosphate), with the release of PPi. To a lesser extent, also acts on hypoxanthine. This chain is Xanthine-guanine phosphoribosyltransferase, found in Escherichia coli (strain UTI89 / UPEC).